Reading from the N-terminus, the 86-residue chain is Mu-theraphotoxin-Hhn1b 3 (86 aa).

The N-terminal stretch at 1–21 is a signal peptide; sequence MKASMFLALTGLALLFVVCYA. The propeptide occupies 22 to 49; it reads SESEEKEFSNELLSSVLAVDDNSKGEER. Cystine bridges form between Cys-51–Cys-66, Cys-58–Cys-73, and Cys-65–Cys-80. Ile-84 bears the Isoleucine amide mark.

The protein belongs to the neurotoxin 10 (Hwtx-1) family. 22 (Htx-4) subfamily. In terms of assembly, monomer. As to expression, expressed by the venom gland.

The protein localises to the secreted. Neurotoxin. Selectively blocks neuronal tetrodotoxin-sensitive voltage-gated sodium channels (Nav) with an IC(50) of 44.6 nM. Does not affect tetrodotoxin-resistant voltage-gated sodium channels or calcium channels. The polypeptide is Mu-theraphotoxin-Hhn1b 3 (Cyriopagopus hainanus (Chinese bird spider)).